The sequence spans 466 residues: Reticulophagy regulator 3 (466 aa).

Residues 1–28 (MAEAEGVPTTPGPASGSTFRGRRDVSGS) form a disordered region. A2 bears the N-acetylalanine mark. Residues 2–80 (AEAEGVPTTP…WCLGLNAAFW (79 aa)) lie on the Cytoplasmic side of the membrane. T10 carries the phosphothreonine modification. At S26 the chain carries Phosphoserine. The helical transmembrane segment at 81-101 (FFALTSLRLVFLLAFGLMIIV) threads the bilayer. Residues 102–163 (CIDQWKNKIW…FIRNVLLFKK (62 aa)) are Lumenal-facing. Residues 164–184 (QNPGKFCLLSCGILTFLAVLG) form a helical membrane-spanning segment. Residues 185–186 (RY) lie on the Cytoplasmic side of the membrane. A helical membrane pass occupies residues 187 to 207 (VPGLLLSYLMLVTVMMWPLAV). Over 208–381 (YHRLWDRAYV…ASRDEAALPE (174 aa)) the chain is Lumenal. A phosphoserine mark is found at S258 and S260. T283 is subject to Phosphothreonine. Positions 284–374 (DSEHSDAEVS…EEPQAPPASR (91 aa)) are disordered. A phosphoserine mark is found at S285, S288, S293, and S303. Polar residues predominate over residues 294–310 (CTDNGTFNLSRGQTPLT). Residues T307 and T310 each carry the phosphothreonine modification. S313, S320, and S360 each carry phosphoserine. A compositionally biased stretch (basic and acidic residues) spans 316–331 (LDGHSDPEESFARDLP). Residues 382 to 402 (LLLGALPVGSNLTSNLASLVS) traverse the membrane as a helical segment. Residues 403–466 (QGMIQLALSG…QLDPASSRSH (64 aa)) lie on the Cytoplasmic side of the membrane. Residues 412–466 (GASQPGPSGAPAQRATRGFLRSPSSDLDTDAEGDDFELLDQSELSQLDPASSRSH) are disordered. The segment covering 438–451 (LDTDAEGDDFELLD) has biased composition (acidic residues). At T440 the chain carries Phosphothreonine. An LIR motif motif is present at residues 445-450 (DDFELL). Polar residues predominate over residues 453–466 (SELSQLDPASSRSH).

This sequence belongs to the RETREG family. As to quaternary structure, interacts with ATG8 family modifier proteins MAP1LC3A, MAP1LC3B, MAP1LC3C, GABARAP, GABARAPL1 and GABARAPL2. Interacts with CANX. Interacts with RTN4 isoform B.

Its subcellular location is the endoplasmic reticulum membrane. Functionally, endoplasmic reticulum (ER)-anchored autophagy regulator which exists in an inactive state under basal conditions but is activated following cellular stress. When activated, induces ER fragmentation and mediates ER delivery into lysosomes through sequestration into autophagosomes via interaction with ATG8 family proteins. Promotes ER membrane curvature and ER tubulation required for subsequent ER fragmentation and engulfment into autophagosomes. Required for collagen quality control in a LIR motif-dependent manner. Mediates NRF1-enhanced neurite outgrowth. The polypeptide is Reticulophagy regulator 3 (Homo sapiens (Human)).